The sequence spans 355 residues: MYNFVKIFQSNFIDINKLSKFEIFLKTIFRIYSSPGRTHLLAHAADISAKYAVRKIYEYMRTDEEGIRILKEKPLLIRQDICFNELKKLPKNTLGYKYMEFLETYKLHAHDREVSHFIKDINESYILTRYRQIHDIAHVVYNLNISIEAEAALKLIELIQTKLPITLLAILIAPFMTPLYRFQYIFEHNIPSNFLCPNFDYTYNDDYNYIDEMSLKQYEYYLTDYFHVEKRESQSFYYKLYKYYFDNLNNSSHVRGSIIYGYQNKNYNDIHYDKLNNEYLYLKNNIKNYFHFQYKPRKLLLTNLYPWAYKTAIQTNKPLHSIYVEKWFDKDIDLFRKKYNITPLPSNLNLMAGIN.

Zn(2+) contacts are provided by His134, Asp135, His138, and Glu150.

Belongs to the COQ4 family. As to quaternary structure, component of a multi-subunit COQ enzyme complex. Zn(2+) is required as a cofactor.

The protein localises to the mitochondrion inner membrane. It carries out the reaction a 4-hydroxy-3-methoxy-5-(all-trans-polyprenyl)benzoate + H(+) = a 2-methoxy-6-(all-trans-polyprenyl)phenol + CO2. It functions in the pathway cofactor biosynthesis; ubiquinone biosynthesis. Functionally, lyase that catalyzes the C1-decarboxylation of 4-hydroxy-3-methoxy-5-(all-trans-polyprenyl)benzoic acid into 2-methoxy-6-(all-trans-polyprenyl)phenol during ubiquinone biosynthesis. The polypeptide is Ubiquinone biosynthesis protein COQ4 homolog, mitochondrial (Plasmodium falciparum (isolate 3D7)).